Here is a 315-residue protein sequence, read N- to C-terminus: Diacylglycerol kinase (315 aa).

Residues 1-132 (MRKRARIIYN…VDIGKMNNRY (132 aa)) form the DAGKc domain. ATP is bound by residues 10–14 (NPTSG), Thr41, 67–73 (GDGTLNE), and Thr94. Positions 213, 216, and 218 each coordinate Mg(2+). Glu273 functions as the Proton acceptor in the catalytic mechanism.

This sequence belongs to the diacylglycerol/lipid kinase family. Homodimer. Mg(2+) serves as cofactor.

The enzyme catalyses a 1,2-diacyl-sn-glycerol + ATP = a 1,2-diacyl-sn-glycero-3-phosphate + ADP + H(+). Catalyzes the phosphorylation of diacylglycerol (DAG) into phosphatidic acid. Is a key enzyme involved in the production of lipoteichoic acid by reintroducing DAG formed from the breakdown of membrane phospholipids into the phosphatidylglycerol biosynthetic pathway. The polypeptide is Diacylglycerol kinase (dagK) (Staphylococcus aureus (strain USA300 / TCH1516)).